Here is a 107-residue protein sequence, read N- to C-terminus: SH3 domain-binding glutamic acid-rich-like protein 2 (107 aa).

Residues 61-67 (QGNPLPP) carry the SH3-binding motif.

This sequence belongs to the SH3BGR family.

The protein localises to the nucleus. The polypeptide is SH3 domain-binding glutamic acid-rich-like protein 2 (Sh3bgrl2) (Mus musculus (Mouse)).